An 81-amino-acid polypeptide reads, in one-letter code: Anaphase-promoting complex subunit emb-1 (81 aa).

As to quaternary structure, the APC/C is probably composed of at least 12 subunits: apc-2, apc-10, apc-11, cdc-26, emb-1, emb-27, emb-30, mat-1, mat-2, mat-3, such-1 and gfi-3. Expressed in germ cells.

It participates in protein modification; protein ubiquitination. In terms of biological role, probable component of the anaphase promoting complex/cyclosome (APC/C), a cell cycle-regulated E3 ubiquitin ligase that controls progression through mitosis and the G1 phase of the cell cycle. The APC/C complex acts by mediating ubiquitination and subsequent degradation of target proteins. Developmental role in early embryogenesis and the metaphase to anaphase transition in meiosis and mitosis. May be required for germline proliferation. Required for male tail development and hermaphrodite vulva formation. The protein is Anaphase-promoting complex subunit emb-1 of Caenorhabditis elegans.